A 235-amino-acid polypeptide reads, in one-letter code: Zinc transporter ZIP9 (235 aa).

Asn-2 is a glycosylation site (N-linked (GlcNAc...) asparagine). The next 4 helical transmembrane spans lie at 11–31 (SCVP…CWWT), 75–95 (TTTL…GAAA), 104–124 (LIVF…LVSF), and 138–158 (HLLV…LGLS). N-linked (GlcNAc...) asparagine glycosylation occurs at Asn-169. 2 consecutive transmembrane segments (helical) span residues 172-192 (GMAM…HVLP) and 214-234 (LEVA…VGHQ).

Belongs to the ZIP transporter (TC 2.A.5) family.

The protein resides in the golgi apparatus. The protein localises to the trans-Golgi network membrane. It localises to the cell membrane. Its subcellular location is the cytoplasm. It is found in the perinuclear region. The protein resides in the mitochondrion. The protein localises to the nucleus. It carries out the reaction Zn(2+)(in) = Zn(2+)(out). Transports zinc ions across cell and organelle membranes into the cytoplasm and regulates intracellular zinc homeostasis. Participates in the zinc ions efflux out of the secretory compartments. Regulates intracellular zinc level, resulting in the enhancement of AKT1 and MAPK3/MAPK1 (Erk1/2) phosphorylation in response to the BCR activation. Also functions as a membrane androgen receptor that mediates, through a G protein, the non-classical androgen signaling pathway, characterized by the activation of MAPK3/MAPK1 (Erk1/2) and transcription factors CREB1 or ATF1. This pathway contributes to CLDN1 and CLDN5 expression and tight junction formation between adjacent Sertoli cells. Mediates androgen-induced vascular endothelial cell proliferation through activation of an inhibitory G protein leading to the AKT1 and MAPK3/MAPK1 (Erk1/2) activation which in turn modulate inhibition (phosphorylation) of GSK3B and CCND1 transcription. Moreover, has dual functions as a membrane-bound androgen receptor and as an androgen-dependent zinc transporter both of which are mediated through an inhibitory G protein (Gi) that mediates both MAP kinase and zinc signaling leading to the androgen-dependent apoptotic process. The polypeptide is Zinc transporter ZIP9 (Macaca fascicularis (Crab-eating macaque)).